Here is an 845-residue protein sequence, read N- to C-terminus: Taste receptor type 1 member 3 (845 aa).

A signal peptide spans 1–18 (MAGLMLLSLMALLGLGAG). Residues 19–568 (APLCLSRQLR…FLAWGQPAVL (550 aa)) lie on the Extracellular side of the membrane. Residues N128 and N262 are each glycosylated (N-linked (GlcNAc...) asparagine). A helical membrane pass occupies residues 569–589 (VLLILLALALGLVLVALGLFI). At 590–601 (RHRDSPLVQASG) the chain is on the cytoplasmic side. A helical membrane pass occupies residues 602-622 (GPRACFGLACLGLVCLSVLLF). Residues 623-637 (PGQPGPASCLAQQPL) are Extracellular-facing. A helical membrane pass occupies residues 638 to 658 (LHLPLTGCLSTLFLQAAQIFV). Topologically, residues 659–680 (GSELPSSWADQLRRCLQGPWAW) are cytoplasmic. A helical transmembrane segment spans residues 681 to 701 (LLVLLALLAEAALCAWYLVAF). The Extracellular segment spans residues 702-727 (PPEVVTDWWVLPTQVLVHCRMRSWIS). Residues 728-748 (FGLLHAINAMLAFLCFLGTFL) traverse the membrane as a helical segment. Over 749–760 (VQSRPGRYNGAR) the chain is Cytoplasmic. The chain crosses the membrane as a helical span at residues 761–781 (GLTFAMLAYFITWISFVPLFA). Residues 782-789 (NVHVAYQP) lie on the Extracellular side of the membrane. Residues 790-810 (TVQMAAILLCALGILATFHLP) form a helical membrane-spanning segment. Residues 811 to 845 (KCYLLLQQLELNNPEFFLGDDARGQGSSGSGGKET) lie on the Cytoplasmic side of the membrane.

The protein belongs to the G-protein coupled receptor 3 family. TAS1R subfamily. As to quaternary structure, forms homodimers or heterodimers with TAS1R1 and TAS1R2.

The protein localises to the cell membrane. Functionally, putative taste receptor. TAS1R1/TAS1R3 responds to the umami taste stimulus (the taste of monosodium glutamate). TAS1R2/TAS1R3 recognizes diverse natural and synthetic sweeteners. TAS1R3 is essential for the recognition and response to the disaccharide trehalose. Sequence differences within and between species can significantly influence the selectivity and specificity of taste responses. This Canis lupus familiaris (Dog) protein is Taste receptor type 1 member 3 (TAS1R3).